Consider the following 534-residue polypeptide: Pentatricopeptide repeat-containing protein At2g20540 (534 aa).

PPR repeat units lie at residues 41-71 (SSFM…VSNP), 72-106 (NVFL…SFEL), 108-142 (DRFT…GPRF), 143-173 (HVVT…MYER), 174-208 (DVIS…TIVS), 209-239 (WTAM…GIEP), 240-274 (DEIS…GFLK), 275-305 (QTGV…MEGK), 306-340 (DVIS…KVKP), 341-371 (NGIT…MRQD), and 377-407 (KIEH…MPMK). The tract at residues 412–487 (IWGSLLSSCR…TPGGSLIEVN (76 aa)) is type E motif. The segment at 488–518 (NIVQEFVSGDNSKPFWTEISIVLQLFTSHQD) is type E(+) motif.

Belongs to the PPR family. PCMP-E subfamily.

This Arabidopsis thaliana (Mouse-ear cress) protein is Pentatricopeptide repeat-containing protein At2g20540 (PCMP-E78).